We begin with the raw amino-acid sequence, 1403 residues long: Mannuronan C5-epimerase AlgE1 (1403 aa).

PbH1 repeat units lie at residues 133–155 (DRDV…DPHE), 157–179 (TINL…VADY), 180–202 (QVGG…NIVT), 204–226 (TNDF…VVQR), 257–279 (AHDV…RVYG), 280–302 (AQDV…YAEV), and 320–359 (TTGT…SIDG). Disordered regions lie at residues 372–395 (STVS…NDAL) and 408–428 (AGDD…GAGR). 8 Hemolysin-type calcium-binding repeats span residues 388–403 (GSAG…AHET), 406–422 (GQAG…NDIL), 424–440 (GGAG…ADTF), 557–573 (GYGG…DDIL), 574–591 (VGGA…ADVF), 697–712 (EGTD…EANE), 716–732 (GLDG…DDIL), and 734–750 (GGAG…ADTF). PbH1 repeat units lie at residues 977–999 (DRNV…DPHE), 1001–1023 (TINL…VADY), 1024–1046 (LVDS…NIVT), 1048–1070 (TYDF…TIQR), 1101–1123 (TNNV…RLYG), 1124–1146 (TEDV…YPEV), 1163–1185 (TLNT…AVRE), and 1190–1212 (SDYT…QLSG). Hemolysin-type calcium-binding repeat units lie at residues 1227–1243 (GTDG…NDQL), 1244–1261 (YGGA…DDLL), and 1263–1279 (GGAG…ADTF).

Belongs to the D-mannuronate C5-epimerase family. Requires Ca(2+) as cofactor.

It localises to the secreted. The catalysed reaction is [(1-&gt;4)-beta-D-mannuronosyl](n) = [alginate](n). It participates in glycan biosynthesis; alginate biosynthesis. Its activity is regulated as follows. Inhibited by zinc. Its function is as follows. Converts beta-D-mannuronic acid (M) to alpha-L-guluronic acid (G), producing a polymer with gel-forming capacity, required for the formation of the cyst coat. This Azotobacter vinelandii protein is Mannuronan C5-epimerase AlgE1.